The following is a 310-amino-acid chain: Putative S-adenosyl-L-methionine-dependent methyltransferase MUL_4762 (310 aa).

S-adenosyl-L-methionine is bound by residues aspartate 132 and 161 to 162 (DL).

This sequence belongs to the UPF0677 family.

Its function is as follows. Exhibits S-adenosyl-L-methionine-dependent methyltransferase activity. This is Putative S-adenosyl-L-methionine-dependent methyltransferase MUL_4762 from Mycobacterium ulcerans (strain Agy99).